We begin with the raw amino-acid sequence, 484 residues long: ATP synthase subunit beta (484 aa).

162–169 (GGAGVGKT) serves as a coordination point for ATP.

This sequence belongs to the ATPase alpha/beta chains family. As to quaternary structure, F-type ATPases have 2 components, CF(1) - the catalytic core - and CF(0) - the membrane proton channel. CF(1) has five subunits: alpha(3), beta(3), gamma(1), delta(1), epsilon(1). CF(0) has three main subunits: a(1), b(2) and c(9-12). The alpha and beta chains form an alternating ring which encloses part of the gamma chain. CF(1) is attached to CF(0) by a central stalk formed by the gamma and epsilon chains, while a peripheral stalk is formed by the delta and b chains.

It is found in the cell inner membrane. The catalysed reaction is ATP + H2O + 4 H(+)(in) = ADP + phosphate + 5 H(+)(out). Its function is as follows. Produces ATP from ADP in the presence of a proton gradient across the membrane. The catalytic sites are hosted primarily by the beta subunits. The protein is ATP synthase subunit beta of Agrobacterium fabrum (strain C58 / ATCC 33970) (Agrobacterium tumefaciens (strain C58)).